The sequence spans 80 residues: Defensin-like protein 44 (80 aa).

The first 27 residues, 1 to 27 (MAITKTSVTLLLLIIMAASLSNFSVLA), serve as a signal peptide directing secretion. Cystine bridges form between Cys-40-Cys-79, Cys-44-Cys-67, Cys-53-Cys-77, and Cys-57-Cys-78.

It belongs to the DEFL family.

The protein localises to the secreted. The protein is Defensin-like protein 44 of Arabidopsis thaliana (Mouse-ear cress).